Reading from the N-terminus, the 309-residue chain is Homoserine kinase (309 aa).

Position 91-101 (91-101) interacts with ATP; sequence PLARGLGSSAA.

This sequence belongs to the GHMP kinase family. Homoserine kinase subfamily.

It localises to the cytoplasm. It catalyses the reaction L-homoserine + ATP = O-phospho-L-homoserine + ADP + H(+). Its pathway is amino-acid biosynthesis; L-threonine biosynthesis; L-threonine from L-aspartate: step 4/5. Its function is as follows. Catalyzes the ATP-dependent phosphorylation of L-homoserine to L-homoserine phosphate. This is Homoserine kinase from Bacillus velezensis (strain DSM 23117 / BGSC 10A6 / LMG 26770 / FZB42) (Bacillus amyloliquefaciens subsp. plantarum).